The chain runs to 466 residues: Neuronal acetylcholine receptor subunit non-alpha-3 (466 aa).

Residues 1-28 (MKLQISGLLLVTAVAYATIEAPEEFVSL) form the signal peptide. Residues 29-235 (AEMEDTLLRN…VTYSFILKRL (207 aa)) are Extracellular-facing. N-linked (GlcNAc...) asparagine glycans are attached at residues Asn-54, Asn-141, Asn-169, and Asn-208. Cys-156 and Cys-170 form a disulfide bridge. Transmembrane regions (helical) follow at residues 236 to 260 (PLFY…VFYL), 268 to 285 (LLLS…LLVI), and 302 to 323 (YLLF…VINV). The Cytoplasmic segment spans residues 324–438 (HHRSSATYHP…WKFVAQVLDR (115 aa)). Residues 439 to 456 (IFLWVFLTASVLGTILIF) traverse the membrane as a helical segment.

Belongs to the ligand-gated ion channel (TC 1.A.9) family. Acetylcholine receptor (TC 1.A.9.1) subfamily. As to quaternary structure, neuronal AChR seems to be composed of two different type of subunits: alpha and non-alpha (beta). As to expression, retina, tectum and brain.

The protein resides in the postsynaptic cell membrane. Its subcellular location is the cell membrane. Its function is as follows. After binding acetylcholine, the AChR responds by an extensive change in conformation that affects all subunits and leads to opening of an ion-conducting channel across the plasma membrane. The polypeptide is Neuronal acetylcholine receptor subunit non-alpha-3 (Carassius auratus (Goldfish)).